A 557-amino-acid polypeptide reads, in one-letter code: Phosphomethylpyrimidine synthase (557 aa).

Substrate contacts are provided by residues Asn-197, Met-226, Tyr-255, His-291, 311 to 313 (SRG), 352 to 355 (DGLR), and Glu-391. His-395 contributes to the Zn(2+) binding site. Residue Tyr-418 participates in substrate binding. His-459 is a binding site for Zn(2+). [4Fe-4S] cluster is bound by residues Cys-539, Cys-542, and Cys-547.

This sequence belongs to the ThiC family. As to quaternary structure, homodimer. Requires [4Fe-4S] cluster as cofactor.

The enzyme catalyses 5-amino-1-(5-phospho-beta-D-ribosyl)imidazole + S-adenosyl-L-methionine = 4-amino-2-methyl-5-(phosphooxymethyl)pyrimidine + CO + 5'-deoxyadenosine + formate + L-methionine + 3 H(+). It participates in cofactor biosynthesis; thiamine diphosphate biosynthesis. Its function is as follows. Catalyzes the synthesis of the hydroxymethylpyrimidine phosphate (HMP-P) moiety of thiamine from aminoimidazole ribotide (AIR) in a radical S-adenosyl-L-methionine (SAM)-dependent reaction. The polypeptide is Phosphomethylpyrimidine synthase (Anaplasma phagocytophilum (strain HZ)).